A 141-amino-acid chain; its full sequence is Putative nickel-responsive regulator (141 aa).

Residues histidine 80, histidine 91, histidine 93, and cysteine 99 each contribute to the Ni(2+) site.

It belongs to the transcriptional regulatory CopG/NikR family. Ni(2+) serves as cofactor.

Functionally, transcriptional regulator. This is Putative nickel-responsive regulator from Methanococcus aeolicus (strain ATCC BAA-1280 / DSM 17508 / OCM 812 / Nankai-3).